The following is a 490-amino-acid chain: Betaine aldehyde dehydrogenase (490 aa).

Asp-93 is a binding site for K(+). 150–152 (GAW) is an NAD(+) binding site. Lys-162 functions as the Charge relay system in the catalytic mechanism. 176-179 (KPSE) contributes to the NAD(+) binding site. Val-180 contacts K(+). NAD(+) is bound at residue 230 to 233 (GIAS). Residue Leu-246 participates in K(+) binding. The Proton acceptor role is filled by Glu-252. NAD(+)-binding residues include Gly-254, Cys-286, and Glu-387. The Nucleophile role is filled by Cys-286. Cys-286 carries the cysteine sulfenic acid (-SOH) modification. K(+) is bound by residues Lys-457 and Gly-460. The active-site Charge relay system is the Glu-464.

The protein belongs to the aldehyde dehydrogenase family. As to quaternary structure, dimer of dimers. It depends on K(+) as a cofactor.

It catalyses the reaction betaine aldehyde + NAD(+) + H2O = glycine betaine + NADH + 2 H(+). It functions in the pathway amine and polyamine biosynthesis; betaine biosynthesis via choline pathway; betaine from betaine aldehyde: step 1/1. Its function is as follows. Involved in the biosynthesis of the osmoprotectant glycine betaine. Catalyzes the irreversible oxidation of betaine aldehyde to the corresponding acid. This is Betaine aldehyde dehydrogenase from Yersinia pseudotuberculosis serotype IB (strain PB1/+).